Reading from the N-terminus, the 355-residue chain is F-box only protein 32 (355 aa).

A Nuclear localization signal motif is present at residues 62–67; that stretch reads KKRKKD. The Nuclear export signal motif lies at 169-173; it reads LLQTL. The F-box domain maps to 223–271; that stretch reads LTFTDLPLCLQLNIMQRLSDGRDLVSLGQVAPDLHVLSEDRLLWKKLCQ. The Bipartite nuclear localization signal motif lies at 280–295; sequence RKRLILSDKGQLDWKK.

As to quaternary structure, part of the SCF (SKP1-CUL1-F-box) E3 ubiquitin-protein ligase complex SCF(FBXO32) formed of CUL1, SKP1, RBX1 and FBXO32.

It localises to the cytoplasm. Its subcellular location is the nucleus. Its pathway is protein modification; protein ubiquitination. Substrate recognition component of a SCF (SKP1-CUL1-F-box protein) E3 ubiquitin-protein ligase complex which mediates the ubiquitination and subsequent proteasomal degradation of target proteins. Probably recognizes and binds to phosphorylated target proteins during skeletal muscle atrophy. Recognizes TERF1. The chain is F-box only protein 32 (FBXO32) from Sus scrofa (Pig).